Consider the following 433-residue polypeptide: Adenylosuccinate synthetase (433 aa).

GTP is bound by residues 11 to 17 (GDEGKGK) and 39 to 41 (GHT). Asp12 acts as the Proton acceptor in catalysis. Positions 12 and 39 each coordinate Mg(2+). IMP contacts are provided by residues 12–15 (DEGK), 37–40 (NAGH), Thr134, Arg148, Asn230, Thr245, and Arg309. Catalysis depends on His40, which acts as the Proton donor. 305-311 (VTTGRKR) is a binding site for substrate. Residues Arg311, 337–339 (KLD), and 419–421 (GTG) contribute to the GTP site.

It belongs to the adenylosuccinate synthetase family. As to quaternary structure, homodimer. Mg(2+) is required as a cofactor.

The protein localises to the cytoplasm. The catalysed reaction is IMP + L-aspartate + GTP = N(6)-(1,2-dicarboxyethyl)-AMP + GDP + phosphate + 2 H(+). It participates in purine metabolism; AMP biosynthesis via de novo pathway; AMP from IMP: step 1/2. Plays an important role in the de novo pathway and in the salvage pathway of purine nucleotide biosynthesis. Catalyzes the first committed step in the biosynthesis of AMP from IMP. The chain is Adenylosuccinate synthetase from Eremothecium gossypii (strain ATCC 10895 / CBS 109.51 / FGSC 9923 / NRRL Y-1056) (Yeast).